The chain runs to 106 residues: Urease subunit beta (106 aa).

It belongs to the urease beta subunit family. In terms of assembly, heterotrimer of UreA (gamma), UreB (beta) and UreC (alpha) subunits. Three heterotrimers associate to form the active enzyme.

The protein localises to the cytoplasm. The enzyme catalyses urea + 2 H2O + H(+) = hydrogencarbonate + 2 NH4(+). Its pathway is nitrogen metabolism; urea degradation; CO(2) and NH(3) from urea (urease route): step 1/1. This is Urease subunit beta from Alkalilimnicola ehrlichii (strain ATCC BAA-1101 / DSM 17681 / MLHE-1).